Consider the following 293-residue polypeptide: Serine-threonine kinase receptor-associated protein (293 aa).

WD repeat units follow at residues 9-53, 54-93, 95-134, 138-178, 180-217, 219-258, and 261-293; these read GHSR…GTFE, GHKGAVWSSRFNSTASQALTASADYTVKLWDTLNGSEILS, EHQSIVKTADFSNNNSRVVTGGSEKILRIFDLERPNDPLL, GHTN…QVSL, AKSSITSMEFSKDRRFLVTTAGNEVTFWDAQSFYPLKV, SLPFDVNCASLHPDNSKFIAGGSDFWVHVYDFSTGNEIEV, and GHHGPVNCCRFSPDGASFASGSLDGTIRLWKGM.

It belongs to the WD repeat STRAP family. As to quaternary structure, part of the core SMN complex.

In terms of biological role, the SMN complex catalyzes the assembly of small nuclear ribonucleoproteins (snRNPs), the building blocks of the spliceosome, and thereby plays an important role in the splicing of cellular pre-mRNAs. Most spliceosomal snRNPs contain a common set of Sm proteins SNRPB, SNRPD1, SNRPD2, SNRPD3, SNRPE, SNRPF and SNRPG that assemble in a heptameric protein ring on the Sm site of the small nuclear RNA to form the core snRNP (Sm core). In the cytosol, the Sm proteins SNRPD1, SNRPD2, SNRPE, SNRPF and SNRPG are trapped in an inactive 6S pICln-Sm complex by the chaperone CLNS1A that controls the assembly of the core snRNP. To assemble core snRNPs, the SMN complex accepts the trapped 5Sm proteins from CLNS1A forming an intermediate. Binding of snRNA inside 5Sm triggers eviction of the SMN complex, thereby allowing binding of SNRPD3 and SNRPB to complete assembly of the core snRNP. STRAP may play a role in the cellular distribution of the SMN complex. This is Serine-threonine kinase receptor-associated protein (strap) from Dictyostelium discoideum (Social amoeba).